Reading from the N-terminus, the 219-residue chain is RPA-interacting protein (219 aa).

At Ser18 the chain carries Phosphoserine. An RIP-type zinc finger spans residues 137-212 (CPVCIKYNLR…PSLLMNCLTC (76 aa)). The segment at 164–180 (STDLTEQKLRACLEENV) is mediates nuclear export.

As to quaternary structure, interacts with the RPA1 subunit of RPA complex. In terms of processing, sumoylated; required for localization in the nuclear PML body and transport of RPA complex in PML body. Upon UV irradiation and during S phase, it is desumoylated, releasing RPA complex that is translocated to sites of DNA damage. Sumoylation takes place at different Lys residues.

The protein resides in the nucleus. Its function is as follows. Mediates the import of RPA complex into the nucleus, possibly via some interaction with importin beta. Sumoylation mediates the localization of RPA complex into the PML body of the nucleus, thereby participating in RPA function in DNA metabolism. The protein is RPA-interacting protein (Rpain) of Mus musculus (Mouse).